The sequence spans 475 residues: tRNA-dihydrouridine(16/17) synthase [NAD(P)(+)]-like (475 aa).

FMN contacts are provided by residues 23-25 (PMV) and Gln-79. Cys-108 acts as the Proton donor in catalysis. Residues Lys-147, His-175, 208–210 (NGN), and 232–233 (AE) each bind FMN. A disordered region spans residues 343–388 (GPREGSKENSGGRSKRALEEEEGSMEGLSKNKLKKQLRNPHKTFDP). Residues 373 to 383 (NKLKKQLRNPH) are compositionally biased toward basic residues.

It belongs to the Dus family. Dus1 subfamily. Requires FMN as cofactor.

It localises to the cytoplasm. The protein localises to the nucleus. It carries out the reaction 5,6-dihydrouridine(16) in tRNA + NADP(+) = uridine(16) in tRNA + NADPH + H(+). The catalysed reaction is 5,6-dihydrouridine(16) in tRNA + NAD(+) = uridine(16) in tRNA + NADH + H(+). The enzyme catalyses 5,6-dihydrouridine(17) in tRNA + NAD(+) = uridine(17) in tRNA + NADH + H(+). It catalyses the reaction 5,6-dihydrouridine(17) in tRNA + NADP(+) = uridine(17) in tRNA + NADPH + H(+). In terms of biological role, catalyzes the synthesis of dihydrouridine, a modified base found in the D-loop of most tRNAs. Specifically modifies U16 and U17 in cytoplasmic tRNAs. Affects the level of some mature tRNA and thereby the total cellular translation. The protein is tRNA-dihydrouridine(16/17) synthase [NAD(P)(+)]-like (Dus1l) of Mus musculus (Mouse).